A 1035-amino-acid polypeptide reads, in one-letter code: Enteropeptidase (1035 aa).

The N-myristoyl glycine moiety is linked to residue Gly-2. Residues 2–18 (GSKRSVPSRHRSLTTYE) lie on the Cytoplasmic side of the membrane. A helical; Signal-anchor for type II membrane protein transmembrane segment spans residues 19 to 47 (VMFAVLFVILVALCAGLIAVSWLSIQGSV). Topologically, residues 48–1035 (KDAAFGKSHE…FTEWIQSFLH (988 aa)) are extracellular. The SEA domain maps to 54–169 (KSHEARGTLK…NSIDITASLE (116 aa)). N-linked (GlcNAc...) asparagine glycosylation is found at Asn-116, Asn-147, Asn-170, and Asn-194. Residues 197 to 238 (IECPPDSRLCADALKCIAIDLFCDGELNCPDGSDEDNKTCAT) form the LDL-receptor class A 1 domain. Disulfide bonds link Cys-199-Cys-212, Cys-206-Cys-225, Cys-219-Cys-236, and Cys-240-Cys-269. Residues Asn-233, Asn-263, Asn-264, Asn-404, Asn-456, Asn-486, Asn-519, Asn-550, and Asn-646 are each glycosylated (N-linked (GlcNAc...) asparagine). Positions 240 to 350 (CDGRFLLTGS…IGFKVTYTAF (111 aa)) constitute a CUB 1 domain. One can recognise an MAM domain in the interval 358–520 (YEKINCNFED…ISLTYGICNV (163 aa)). Cys-540 and Cys-568 are disulfide-bonded. Residues 540-650 (CGGPHDLWEP…QGFKANFTTG (111 aa)) form the CUB 2 domain. The region spanning 657–695 (EPCKEDNFQCKDGECIPLVNLCDGFPHCKDGSDEAHCVR) is the LDL-receptor class A 2 domain. 3 disulfides stabilise this stretch: Cys-659-Cys-671, Cys-666-Cys-684, and Cys-678-Cys-693. The SRCR domain maps to 694-787 (VRLFNGTTDS…LILLQCNYKS (94 aa)). Asn-698, Asn-722, Asn-741, and Asn-762 each carry an N-linked (GlcNAc...) asparagine glycan. Disulfide bonds link Cys-773-Cys-783, Cys-788-Cys-912, Cys-826-Cys-842, Cys-926-Cys-993, Cys-957-Cys-972, and Cys-983-Cys-1011. The 235-residue stretch at 801-1035 (IVGGSDSREG…FTEWIQSFLH (235 aa)) folds into the Peptidase S1 domain. The Charge relay system role is filled by His-841. Asn-864 is a glycosylation site (N-linked (GlcNAc...) asparagine). The Charge relay system role is filled by Asp-892. N-linked (GlcNAc...) asparagine glycans are attached at residues Asn-903 and Asn-965. Ser-987 serves as the catalytic Charge relay system.

This sequence belongs to the peptidase S1 family. As to quaternary structure, heterodimer of a catalytic (light) chain and a multidomain (heavy) chain linked by a disulfide bond. The chains are derived from a single precursor that is cleaved by a trypsin-like protease. In terms of tissue distribution, intestinal brush border.

It localises to the membrane. It carries out the reaction Activation of trypsinogen by selective cleavage of 6-Lys-|-Ile-7 bond.. In terms of biological role, responsible for initiating activation of pancreatic proteolytic proenzymes (trypsin, chymotrypsin and carboxypeptidase A). It catalyzes the conversion of trypsinogen to trypsin which in turn activates other proenzymes including chymotrypsinogen, procarboxypeptidases, and proelastases. This is Enteropeptidase (TMPRSS15) from Bos taurus (Bovine).